A 291-amino-acid chain; its full sequence is Putative carboxymethylenebutenolidase (291 aa).

The first 40 residues, 1-40 (MTAFDADLRSLAAQTTLSRRTVIATSLATGFALAVQPVAA), serve as a signal peptide directing secretion. Residues cysteine 170, aspartate 227, and histidine 259 contribute to the active site.

The protein belongs to the dienelactone hydrolase family.

The enzyme catalyses 2-(5-oxo-2,5-dihydrofuran-2-ylidene)acetate + H2O = 4-oxohex-2-enedioate + H(+). The polypeptide is Putative carboxymethylenebutenolidase (Methylorubrum extorquens (strain ATCC 14718 / DSM 1338 / JCM 2805 / NCIMB 9133 / AM1) (Methylobacterium extorquens)).